Here is a 438-residue protein sequence, read N- to C-terminus: Glucosamine kinase (438 aa).

ATP-binding positions include Lys133, 186-188 (AYL), and Asp193. D-glucosamine is bound at residue Asp300. Mg(2+)-binding residues include Gln305, Asp317, and Asp319. The short motif at 405–420 (QEVREYLYAVRHLPHW) is the Substrate specificity determinant motif element. Glu409 contacts D-glucosamine.

Belongs to the actinobacterial glucosamine kinase family. As to quaternary structure, monomer. Mg(2+) serves as cofactor.

It carries out the reaction D-glucosamine + ATP = D-glucosamine 6-phosphate + ADP + H(+). Functionally, catalyzes the ATP-dependent phosphorylation of D-glucosamine (GlcN) to D-glucosamine 6-phosphate. May be involved in the phosphorylation of acquired extracellular GlcN derived from the hydrolysis of chitosan, i.e., in the incorporation of exogenous GlcN into the bacterial GlcNAc metabolism. To a lesser extent, is also active on glucose, but is unable to phosphorylate maltose, 18 other sugars and several aminoglycoside antibiotics. In Streptacidiphilus jiangxiensis, this protein is Glucosamine kinase.